The primary structure comprises 545 residues: Thermosome subunit beta (545 aa).

It belongs to the TCP-1 chaperonin family. In terms of assembly, forms a Heterooligomeric complex of two stacked eight-membered rings.

Its function is as follows. Molecular chaperone; binds unfolded polypeptides in vitro, and has a weak ATPase activity. In Archaeoglobus fulgidus (strain ATCC 49558 / DSM 4304 / JCM 9628 / NBRC 100126 / VC-16), this protein is Thermosome subunit beta (thsB).